A 394-amino-acid chain; its full sequence is Elongation factor Tu, mitochondrial (394 aa).

A tr-type G domain is found at 10–204 (KPHCNIGTIG…AVDNYIPQPE (195 aa)). The interval 19–26 (GHVDHGKT) is G1. 19–26 (GHVDHGKT) contacts GTP. The interval 60-64 (GITIS) is G2. Positions 81–84 (DCPG) are G3. Residues 81–85 (DCPGH) and 136–139 (NKVD) contribute to the GTP site. A G4 region spans residues 136–139 (NKVD). A G5 region spans residues 174 to 176 (SAL).

The protein belongs to the TRAFAC class translation factor GTPase superfamily. Classic translation factor GTPase family. EF-Tu/EF-1A subfamily.

It localises to the mitochondrion. This protein promotes the GTP-dependent binding of aminoacyl-tRNA to the A-site of ribosomes during protein biosynthesis. The polypeptide is Elongation factor Tu, mitochondrial (TUFA) (Reclinomonas americana).